Here is a 73-residue protein sequence, read N- to C-terminus: Putative membrane protein insertion efficiency factor (73 aa).

It belongs to the UPF0161 family.

It is found in the cell inner membrane. Functionally, could be involved in insertion of integral membrane proteins into the membrane. This chain is Putative membrane protein insertion efficiency factor, found in Parabacteroides distasonis (strain ATCC 8503 / DSM 20701 / CIP 104284 / JCM 5825 / NCTC 11152).